The chain runs to 350 residues: D-alanine--D-alanine ligase (350 aa).

Residues 135-335 enclose the ATP-grasp domain; that stretch reads KLYAKNLGVK…LAQSLPKTPK (201 aa). 164 to 219 is a binding site for ATP; it reads KPSFNFPFIVKPNNAGSSLGVSVVKEEKELAYALDGAFEYSKEVLIEPFIQRVKEY. 3 residues coordinate Mg(2+): Asp291, Glu303, and Asn305.

It belongs to the D-alanine--D-alanine ligase family. Mg(2+) serves as cofactor. Requires Mn(2+) as cofactor.

It is found in the cytoplasm. It carries out the reaction 2 D-alanine + ATP = D-alanyl-D-alanine + ADP + phosphate + H(+). It participates in cell wall biogenesis; peptidoglycan biosynthesis. In terms of biological role, cell wall formation. The sequence is that of D-alanine--D-alanine ligase from Helicobacter acinonychis (strain Sheeba).